A 241-amino-acid chain; its full sequence is Interleukin-6 (241 aa).

The disordered stretch occupies residues 1 to 25; it reads MNFTEGCEATGRRPGSAGSRRRRAP. The N-terminal stretch at 1-46 is a signal peptide; the sequence is MNFTEGCEATGRRPGSAGSRRRRAPRPGPVALLPLLLPLLLPPAAA. Residues cysteine 122 and cysteine 132 are joined by a disulfide bond.

This sequence belongs to the IL-6 superfamily. Component of a hexamer of two molecules each of IL6, IL6R and IL6ST; first binds to IL6R to associate with the signaling subunit IL6ST.

It localises to the secreted. Its function is as follows. Cytokine with a wide variety of biological functions in immunity, tissue regeneration, and metabolism. Binds to IL6R, then the complex associates to the signaling subunit IL6ST/gp130 to trigger the intracellular IL6-signaling pathway. The interaction with the membrane-bound IL6R and IL6ST stimulates 'classic signaling', whereas the binding of IL6 and soluble IL6R to IL6ST stimulates 'trans-signaling'. Alternatively, 'cluster signaling' occurs when membrane-bound IL6:IL6R complexes on transmitter cells activate IL6ST receptors on neighboring receiver cells. The chain is Interleukin-6 (IL6) from Gallus gallus (Chicken).